A 348-amino-acid polypeptide reads, in one-letter code: MDEAPRIAIDAMGGDGGPATIIAGAAQARDRDSSLRLTFTGDETVIRAEMARFPQLADSIVVHCDDVITGDDKPSQAIRRTKSSSMGAAILAVKAGEAAAALSAGNTGALMAIAKLSLRTMHGIDRPALAALMPTLGDNDLVMLDLGANTDCDARNLVEFAVMGAAYSRLALGIESPRVRLLNIGTEELKGTGELKEAAAMLRQQTGGAWRFDGFIEADRLGRGEADVIVSDGFSGNIALKSIEGTARFITDLLRRAFSSSLRSKAGFILSRPAFALLRHHLDPNNHNGAVFLGLNGLVVKSHGGADEKGIANAIAVAAKIAREDLTRRITDDLEDFRSHAVQTEGVA.

This sequence belongs to the PlsX family. As to quaternary structure, homodimer. Probably interacts with PlsY.

The protein localises to the cytoplasm. The enzyme catalyses a fatty acyl-[ACP] + phosphate = an acyl phosphate + holo-[ACP]. It functions in the pathway lipid metabolism; phospholipid metabolism. Functionally, catalyzes the reversible formation of acyl-phosphate (acyl-PO(4)) from acyl-[acyl-carrier-protein] (acyl-ACP). This enzyme utilizes acyl-ACP as fatty acyl donor, but not acyl-CoA. The sequence is that of Phosphate acyltransferase from Rhizorhabdus wittichii (strain DSM 6014 / CCUG 31198 / JCM 15750 / NBRC 105917 / EY 4224 / RW1) (Sphingomonas wittichii).